Reading from the N-terminus, the 950-residue chain is Coatomer subunit beta-2 (950 aa).

5 HEAT repeats span residues 92–126 (PEMI…LSEP), 127–164 (EVLE…LPHG), 275–312 (TAVR…TSHR), 313–350 (DVMV…ARNV), and 392–429 (EVAG…TNPK).

In terms of assembly, oligomeric complex that consists of at least the alpha, beta, beta', gamma, delta, epsilon and zeta subunits.

It localises to the cytoplasm. It is found in the golgi apparatus membrane. Its subcellular location is the cytoplasmic vesicle. The protein resides in the COPI-coated vesicle membrane. In terms of biological role, the coatomer is a cytosolic protein complex that binds to dilysine motifs and reversibly associates with Golgi non-clathrin-coated vesicles, which further mediate biosynthetic protein transport from the ER, via the Golgi up to the trans Golgi network. Coatomer complex is required for budding from Golgi membranes, and is essential for the retrograde Golgi-to-ER transport of dilysine-tagged proteins. The polypeptide is Coatomer subunit beta-2 (Oryza sativa subsp. japonica (Rice)).